The primary structure comprises 157 residues: Small ribosomal subunit protein bS16 (157 aa).

Residues 114-157 (NEGPTAEAITEKKKKAKEEAAAKAAAEAEAAAKAEEAPAEEAAE) form a disordered region.

Belongs to the bacterial ribosomal protein bS16 family.

This Corynebacterium diphtheriae (strain ATCC 700971 / NCTC 13129 / Biotype gravis) protein is Small ribosomal subunit protein bS16.